Here is a 292-residue protein sequence, read N- to C-terminus: Small ribosomal subunit biogenesis GTPase RsgA (292 aa).

Positions 64-221 (RSELFRPAVA…LVDTPGFSSL (158 aa)) constitute a CP-type G domain. GTP is bound by residues 113–116 (NKMD) and 164–172 (GPSGVGKST). 4 residues coordinate Zn(2+): cysteine 245, cysteine 250, histidine 252, and cysteine 258.

It belongs to the TRAFAC class YlqF/YawG GTPase family. RsgA subfamily. As to quaternary structure, monomer. Associates with 30S ribosomal subunit, binds 16S rRNA. Requires Zn(2+) as cofactor.

Its subcellular location is the cytoplasm. Functionally, one of several proteins that assist in the late maturation steps of the functional core of the 30S ribosomal subunit. Helps release RbfA from mature subunits. May play a role in the assembly of ribosomal proteins into the subunit. Circularly permuted GTPase that catalyzes slow GTP hydrolysis, GTPase activity is stimulated by the 30S ribosomal subunit. The sequence is that of Small ribosomal subunit biogenesis GTPase RsgA from Clostridium botulinum (strain Okra / Type B1).